A 76-amino-acid polypeptide reads, in one-letter code: Exodeoxyribonuclease 7 small subunit (76 aa).

The protein belongs to the XseB family. In terms of assembly, heterooligomer composed of large and small subunits.

It is found in the cytoplasm. The enzyme catalyses Exonucleolytic cleavage in either 5'- to 3'- or 3'- to 5'-direction to yield nucleoside 5'-phosphates.. Bidirectionally degrades single-stranded DNA into large acid-insoluble oligonucleotides, which are then degraded further into small acid-soluble oligonucleotides. The sequence is that of Exodeoxyribonuclease 7 small subunit from Bacillus cereus (strain ATCC 14579 / DSM 31 / CCUG 7414 / JCM 2152 / NBRC 15305 / NCIMB 9373 / NCTC 2599 / NRRL B-3711).